Reading from the N-terminus, the 556-residue chain is 2-succinyl-5-enolpyruvyl-6-hydroxy-3-cyclohexene-1-carboxylate synthase (556 aa).

The protein belongs to the TPP enzyme family. MenD subfamily. Homodimer. The cofactor is Mg(2+). Mn(2+) serves as cofactor. It depends on thiamine diphosphate as a cofactor.

The catalysed reaction is isochorismate + 2-oxoglutarate + H(+) = 5-enolpyruvoyl-6-hydroxy-2-succinyl-cyclohex-3-ene-1-carboxylate + CO2. Its pathway is quinol/quinone metabolism; 1,4-dihydroxy-2-naphthoate biosynthesis; 1,4-dihydroxy-2-naphthoate from chorismate: step 2/7. It functions in the pathway quinol/quinone metabolism; menaquinone biosynthesis. Catalyzes the thiamine diphosphate-dependent decarboxylation of 2-oxoglutarate and the subsequent addition of the resulting succinic semialdehyde-thiamine pyrophosphate anion to isochorismate to yield 2-succinyl-5-enolpyruvyl-6-hydroxy-3-cyclohexene-1-carboxylate (SEPHCHC). The polypeptide is 2-succinyl-5-enolpyruvyl-6-hydroxy-3-cyclohexene-1-carboxylate synthase (Salmonella paratyphi B (strain ATCC BAA-1250 / SPB7)).